Here is a 369-residue protein sequence, read N- to C-terminus: Putative gustatory receptor 39b (369 aa).

Over 1-32 (MLYSFHPYLKYFALLGLVPWSESCAQSKFVQK) the chain is Cytoplasmic. Residues 33 to 53 (VYSAILIILNAVHFGISIYFP) traverse the membrane as a helical segment. Residues 54 to 59 (QSAELF) lie on the Extracellular side of the membrane. A helical membrane pass occupies residues 60 to 80 (LSLMVNVIVFVARIVCVTVII). At 81 to 122 (LQVMVHYDDYFRFCREMKYLGLRLQCELKIHVGRLKWQSYAK) the chain is on the cytoplasmic side. Residues 123–143 (ILALGIGFLVTVLPSIYVALS) traverse the membrane as a helical segment. The Extracellular portion of the chain corresponds to 144–147 (GSLL). The helical transmembrane segment at 148–168 (YFWSSLLSILIIRMQFVLVLL) threads the bilayer. At 169–224 (NVELLGHHVSLLGIRLQNVLECHLMGANCTLDGNANRLCSLEFLLALKQSHMQLHY) the chain is on the cytoplasmic side. Residues 225–245 (LFTHFNDLFGWSILGTYVVLF) traverse the membrane as a helical segment. At 246 to 265 (SDSTVNIYWTQQVLVEVYEY) the chain is on the extracellular side. The chain crosses the membrane as a helical span at residues 266-286 (KYLYATFSVFVPSFFNILVFC). At 287–348 (RCGEFCQRQS…EGFMSTDNSL (62 aa)) the chain is on the cytoplasmic side. Residues 349-368 (LMSILAAKVTYLIVLMQFSS) form a helical membrane-spanning segment. Position 369 (V369) is a topological domain, extracellular.

This sequence belongs to the insect chemoreceptor superfamily. Gustatory receptor (GR) family. Gr2a subfamily. Expressed in the adult labellar chemosensory neurons and in abdominal ganglions. In larvae, is expressed in neurons of the dorsal and posterior pharyngeal sense organs.

Its subcellular location is the cell membrane. Probable gustatory receptor which mediates acceptance or avoidance behavior, depending on its substrates. Has also atypical sensory function in organ not limited to conventional taste sensing like abdominal ganglions. The protein is Putative gustatory receptor 39b (Gr39b) of Drosophila melanogaster (Fruit fly).